Here is a 552-residue protein sequence, read N- to C-terminus: CTP synthase (552 aa).

Residues M1–L271 form an amidoligase domain region. S18 contributes to the CTP binding site. S18 contributes to the UTP binding site. Residues S19–L24 and D76 contribute to the ATP site. Mg(2+)-binding residues include D76 and E145. Residues D152–E154, K192–Q197, and K228 each bind CTP. Residues K192–Q197 and K228 each bind UTP. The region spanning T296–G546 is the Glutamine amidotransferase type-1 domain. G359 is an L-glutamine binding site. The Nucleophile; for glutamine hydrolysis role is filled by C386. L-glutamine is bound by residues L387–Q390, E410, and R472. Residues H519 and E521 contribute to the active site.

It belongs to the CTP synthase family. In terms of assembly, homotetramer.

The enzyme catalyses UTP + L-glutamine + ATP + H2O = CTP + L-glutamate + ADP + phosphate + 2 H(+). The catalysed reaction is L-glutamine + H2O = L-glutamate + NH4(+). It catalyses the reaction UTP + NH4(+) + ATP = CTP + ADP + phosphate + 2 H(+). It functions in the pathway pyrimidine metabolism; CTP biosynthesis via de novo pathway; CTP from UDP: step 2/2. With respect to regulation, allosterically activated by GTP, when glutamine is the substrate; GTP has no effect on the reaction when ammonia is the substrate. The allosteric effector GTP functions by stabilizing the protein conformation that binds the tetrahedral intermediate(s) formed during glutamine hydrolysis. Inhibited by the product CTP, via allosteric rather than competitive inhibition. In terms of biological role, catalyzes the ATP-dependent amination of UTP to CTP with either L-glutamine or ammonia as the source of nitrogen. Regulates intracellular CTP levels through interactions with the four ribonucleotide triphosphates. The polypeptide is CTP synthase (Thermobifida fusca (strain YX)).